Consider the following 208-residue polypeptide: Probable GTP-binding protein EngB (208 aa).

Residues 23–205 (LTSEMVILGR…RQTLLKYLLT (183 aa)) enclose the EngB-type G domain. GTP contacts are provided by residues 31–38 (GRSNVGKS), 57–61 (GKTRL), 84–87 (DLPG), 154–157 (TKFD), and 182–184 (FNA). Mg(2+) contacts are provided by S38 and T59.

It belongs to the TRAFAC class TrmE-Era-EngA-EngB-Septin-like GTPase superfamily. EngB GTPase family. Requires Mg(2+) as cofactor.

In terms of biological role, necessary for normal cell division and for the maintenance of normal septation. This is Probable GTP-binding protein EngB from Helicobacter pylori (strain Shi470).